A 604-amino-acid polypeptide reads, in one-letter code: NADP-dependent malic enzyme, mitochondrial (604 aa).

Residues 28–50 (SAPAQGCHSKSGPPRPVPLKKRG) are disordered. Residue Tyr-137 is the Proton donor of the active site. Arg-190 contacts NADP(+). The Proton acceptor role is filled by Lys-208. A divalent metal cation-binding residues include Glu-280, Asp-281, and Asp-304. An NADP(+)-binding site is contributed by Asp-304. Phosphoserine is present on Ser-371. Asn-443 serves as a coordination point for NADP(+).

The protein belongs to the malic enzymes family. Requires Mg(2+) as cofactor. Mn(2+) is required as a cofactor.

It localises to the mitochondrion matrix. The catalysed reaction is (S)-malate + NADP(+) = pyruvate + CO2 + NADPH. The enzyme catalyses oxaloacetate + H(+) = pyruvate + CO2. The sequence is that of NADP-dependent malic enzyme, mitochondrial (Me3) from Mus musculus (Mouse).